Here is a 441-residue protein sequence, read N- to C-terminus: Gluconate 2-dehydrogenase cytochrome c subunit (441 aa).

An N-terminal signal peptide occupies residues 1–19 (MMKSILALVLGTLSFAALA). Cytochrome c domains lie at 26 to 129 (ALVK…MHGV), 173 to 289 (PVLA…KSLG), and 312 to 403 (DDSQ…RGSW). Residues C40, C43, H44, C188, C191, H192, C325, C328, and H329 each coordinate heme c.

As to quaternary structure, heterotrimer. It depends on FAD as a cofactor. Binds 3 heme c groupd covalently per subunit.

It localises to the cell membrane. The enzyme catalyses D-gluconate + A = 2-dehydro-D-gluconate + AH2. In terms of biological role, part of the heterotrimer that catalyzes the conversion of D-gluconate to 2-dehydro-D-gluconate. This Pantoea cypripedii (Pectobacterium cypripedii) protein is Gluconate 2-dehydrogenase cytochrome c subunit.